The chain runs to 97 residues: Large ribosomal subunit protein uL23 (97 aa).

The protein belongs to the universal ribosomal protein uL23 family. Part of the 50S ribosomal subunit. Contacts protein L29, and trigger factor when it is bound to the ribosome.

One of the early assembly proteins it binds 23S rRNA. One of the proteins that surrounds the polypeptide exit tunnel on the outside of the ribosome. Forms the main docking site for trigger factor binding to the ribosome. In Thermoanaerobacter pseudethanolicus (strain ATCC 33223 / 39E) (Clostridium thermohydrosulfuricum), this protein is Large ribosomal subunit protein uL23.